We begin with the raw amino-acid sequence, 125 residues long: uncharacterized protein (125 aa).

It belongs to the anhydro-N-acetylmuramic acid kinase family.

This is an uncharacterized protein from Yersinia enterocolitica.